A 209-amino-acid chain; its full sequence is Small ribosomal subunit protein uS3 (209 aa).

One can recognise a KH type-2 domain in the interval 38–107; that stretch reads IRKVVKNAYS…RVIVNVEEIK (70 aa).

The protein belongs to the universal ribosomal protein uS3 family. Part of the 30S ribosomal subunit. Forms a tight complex with proteins S10 and S14.

Functionally, binds the lower part of the 30S subunit head. Binds mRNA in the 70S ribosome, positioning it for translation. The sequence is that of Small ribosomal subunit protein uS3 from Pseudothermotoga lettingae (strain ATCC BAA-301 / DSM 14385 / NBRC 107922 / TMO) (Thermotoga lettingae).